Here is a 111-residue protein sequence, read N- to C-terminus: Probable 4-amino-4-deoxy-L-arabinose-phosphoundecaprenol flippase subunit ArnE (111 aa).

3 helical membrane passes run 36–56 (IVLW…LWLL), 61–81 (VPVG…TLAA), and 88–108 (PVSP…VILG). The EamA domain occupies 40 to 109 (LGLALACIGL…IIGGIVILGS (70 aa)).

It belongs to the ArnE family. As to quaternary structure, heterodimer of ArnE and ArnF.

The protein resides in the cell inner membrane. It functions in the pathway bacterial outer membrane biogenesis; lipopolysaccharide biosynthesis. Translocates 4-amino-4-deoxy-L-arabinose-phosphoundecaprenol (alpha-L-Ara4N-phosphoundecaprenol) from the cytoplasmic to the periplasmic side of the inner membrane. The chain is Probable 4-amino-4-deoxy-L-arabinose-phosphoundecaprenol flippase subunit ArnE from Shigella flexneri serotype 5b (strain 8401).